Consider the following 475-residue polypeptide: Bifunctional protein HldE (475 aa).

The ribokinase stretch occupies residues 1 to 320 (MNSSYLNFKD…AIMFQRSHNT (320 aa)). Residue 196–199 (NLLE) participates in ATP binding. Asp-265 is an active-site residue. Positions 346 to 475 (FTNGCFDILH…TTSIIEKANL (130 aa)) are cytidylyltransferase.

In the N-terminal section; belongs to the carbohydrate kinase PfkB family. This sequence in the C-terminal section; belongs to the cytidylyltransferase family. As to quaternary structure, homodimer.

It carries out the reaction D-glycero-beta-D-manno-heptose 7-phosphate + ATP = D-glycero-beta-D-manno-heptose 1,7-bisphosphate + ADP + H(+). The catalysed reaction is D-glycero-beta-D-manno-heptose 1-phosphate + ATP + H(+) = ADP-D-glycero-beta-D-manno-heptose + diphosphate. It functions in the pathway nucleotide-sugar biosynthesis; ADP-L-glycero-beta-D-manno-heptose biosynthesis; ADP-L-glycero-beta-D-manno-heptose from D-glycero-beta-D-manno-heptose 7-phosphate: step 1/4. The protein operates within nucleotide-sugar biosynthesis; ADP-L-glycero-beta-D-manno-heptose biosynthesis; ADP-L-glycero-beta-D-manno-heptose from D-glycero-beta-D-manno-heptose 7-phosphate: step 3/4. In terms of biological role, catalyzes the phosphorylation of D-glycero-D-manno-heptose 7-phosphate at the C-1 position to selectively form D-glycero-beta-D-manno-heptose-1,7-bisphosphate. Catalyzes the ADP transfer from ATP to D-glycero-beta-D-manno-heptose 1-phosphate, yielding ADP-D-glycero-beta-D-manno-heptose. The sequence is that of Bifunctional protein HldE from Marinomonas sp. (strain MWYL1).